A 134-amino-acid chain; its full sequence is Small ribosomal subunit protein uS8c (134 aa).

The protein belongs to the universal ribosomal protein uS8 family. Part of the 30S ribosomal subunit.

It is found in the plastid. The protein localises to the chloroplast. Functionally, one of the primary rRNA binding proteins, it binds directly to 16S rRNA central domain where it helps coordinate assembly of the platform of the 30S subunit. This Daucus carota (Wild carrot) protein is Small ribosomal subunit protein uS8c (rps8).